The sequence spans 255 residues: 3-hydroxyacyl-CoA dehydrogenase type-2 (255 aa).

Residues Ser-14, Leu-16, Asp-35, Asp-58, Val-59, and Cys-85 each coordinate NAD(+). Ser-149 is a binding site for substrate. Residues Tyr-162, Lys-166, Phe-195, and Thr-197 each contribute to the NAD(+) site. Tyr-162 (proton acceptor) is an active-site residue.

The protein belongs to the short-chain dehydrogenases/reductases (SDR) family. In terms of assembly, component of mitochondrial ribonuclease P, a complex composed of rswl/MRPP1, scu/MRPP2 and mldr/MRPP3. In terms of tissue distribution, found in many tissues including CNS, imaginal disks and salivary glands. Highest expression in both embryonic gonadal primordia and mature ovaries and testes.

The protein resides in the mitochondrion. The catalysed reaction is a (3S)-3-hydroxyacyl-CoA + NAD(+) = a 3-oxoacyl-CoA + NADH + H(+). It catalyses the reaction (3S)-3-hydroxybutanoyl-CoA + NAD(+) = acetoacetyl-CoA + NADH + H(+). It carries out the reaction testosterone + NAD(+) = androst-4-ene-3,17-dione + NADH + H(+). The enzyme catalyses 5alpha-androstane-3alpha,17beta-diol + NAD(+) = 17beta-hydroxy-5alpha-androstan-3-one + NADH + H(+). The catalysed reaction is 17beta-estradiol + NAD(+) = estrone + NADH + H(+). It catalyses the reaction ursodeoxycholate + NAD(+) = 7-oxolithocholate + NADH + H(+). It carries out the reaction 3beta,7beta-dihydroxy-5beta-cholan-24-oate + NAD(+) = 3beta-hydroxy-7-oxo-5beta-cholan-24-oate + NADH + H(+). The enzyme catalyses 11-dehydrocorticosterone + NAD(+) = pregn-4-ene-3,11,20,21-tetraone + NADH + H(+). The catalysed reaction is cortisone + NAD(+) = 17alpha-hydroxypregn-4-en-3,11,20-trione-21-al + NADH + H(+). It catalyses the reaction cortisol + NAD(+) = 11beta,17alpha-dihydroxypregn-4-ene-3,20,21-trione + NADH + H(+). It carries out the reaction 5alpha-pregnan-20beta-ol-3-one + NAD(+) = 5alpha-pregnane-3,20-dione + NADH + H(+). The enzyme catalyses 17beta-hydroxy-5alpha-androstan-3-one + NAD(+) = 5alpha-androstan-3,17-dione + NADH + H(+). Mitochondrial dehydrogenase involved in pathways of fatty acid, and steroid metabolism. Versatile enzyme presenting two types of activity; L-3-hydroxyacyl-CoA dehydrogenase ((3S)-3-hydroxyacyl-CoA dehydrogenase) activity and hydroxysteroid dehydrogenase (HSD) activity with a wide substrate spectrum. As a (3S)-3-hydroxyacyl-CoA dehydrogenase, it functions in the third step of the fatty acid beta-oxidation pathway, a major metabolic process in which fatty acids are oxidized to provide a significant source of energy, while also generating acyl-CoA metabolites used by many metabolic routes. As a HSD, it functions in the degradation pathways of glucocorticoids and sex steroids and epimerization of bile acids; catalyzes the beta-oxidation at position 17 of androgens and estrogens, has 3-alpha-hydroxysteroid dehydrogenase activity with androsterone, and carries out oxidative conversions of 7-beta-hydroxylated bile acids like ursodeoxycholate or isoursodeoxycholate (also known as 3-beta,7-beta-dihydroxy-5-beta-cholan-24-oate or 7-beta-hydroxyisolithocholate, respectively). Also exhibits 20-beta-OH and 21-OH dehydrogenase activities with C21 steroids. Essential for structural and functional integrity of mitochondria. Required for cell survival during embryonic development. May play a role in germline formation. Its function is as follows. In addition to mitochondrial dehydrogenase activity, moonlights as a component of mitochondrial ribonuclease P, a complex that cleaves tRNA molecules in their 5'-ends. Essential for the structural and functional integrity of mitochondria. Function is essential for pupal development. This is 3-hydroxyacyl-CoA dehydrogenase type-2 from Drosophila melanogaster (Fruit fly).